Here is a 122-residue protein sequence, read N- to C-terminus: Large ribosomal subunit protein uL14 (122 aa).

This sequence belongs to the universal ribosomal protein uL14 family. In terms of assembly, part of the 50S ribosomal subunit. Forms a cluster with proteins L3 and L19. In the 70S ribosome, L14 and L19 interact and together make contacts with the 16S rRNA in bridges B5 and B8.

In terms of biological role, binds to 23S rRNA. Forms part of two intersubunit bridges in the 70S ribosome. This Latilactobacillus sakei subsp. sakei (strain 23K) (Lactobacillus sakei subsp. sakei) protein is Large ribosomal subunit protein uL14.